Here is a 605-residue protein sequence, read N- to C-terminus: Adenine deaminase (605 aa).

The protein belongs to the metallo-dependent hydrolases superfamily. Adenine deaminase family. Mn(2+) is required as a cofactor.

It carries out the reaction adenine + H2O + H(+) = hypoxanthine + NH4(+). The chain is Adenine deaminase from Staphylothermus marinus (strain ATCC 43588 / DSM 3639 / JCM 9404 / F1).